Reading from the N-terminus, the 305-residue chain is Protein FdhE homolog (305 aa).

The protein belongs to the FdhE family.

It is found in the cytoplasm. Its function is as follows. Necessary for formate dehydrogenase activity. This chain is Protein FdhE homolog, found in Stutzerimonas stutzeri (strain A1501) (Pseudomonas stutzeri).